We begin with the raw amino-acid sequence, 192 residues long: Ion-translocating oxidoreductase complex subunit A (192 aa).

The next 6 helical transmembrane spans lie at 5-25 (LLLL…FLGL), 39-59 (IGMS…SYLV), 65-85 (LPFD…AVVV), 102-122 (ALGI…VALL), 134-154 (AIFG…FSAM), and 171-191 (AIAM…TGLV).

It belongs to the NqrDE/RnfAE family. As to quaternary structure, the complex is composed of six subunits: RnfA, RnfB, RnfC, RnfD, RnfE and RnfG.

Its subcellular location is the cell inner membrane. Part of a membrane-bound complex that couples electron transfer with translocation of ions across the membrane. The sequence is that of Ion-translocating oxidoreductase complex subunit A from Shewanella baltica (strain OS223).